The chain runs to 179 residues: Large ribosomal subunit protein uL6 (179 aa).

The protein belongs to the universal ribosomal protein uL6 family. In terms of assembly, part of the 50S ribosomal subunit.

This protein binds to the 23S rRNA, and is important in its secondary structure. It is located near the subunit interface in the base of the L7/L12 stalk, and near the tRNA binding site of the peptidyltransferase center. This Chlorobium phaeobacteroides (strain DSM 266 / SMG 266 / 2430) protein is Large ribosomal subunit protein uL6.